The primary structure comprises 480 residues: Probable serine/threonine-protein phosphatase 2A regulatory subunit B'' subunit TON2 (480 aa).

EF-hand domains are found at residues 186-221 (VSLT…LIPN), 294-329 (TSAQ…TLTE), and 369-404 (DTPE…VHQK). 5 residues coordinate Ca(2+): Asp-307, Asp-309, Ser-311, Ser-313, and Glu-318.

In terms of assembly, interacts with PP2AA1. As to expression, widely expressed.

The protein localises to the cytoplasm. It localises to the cytoskeleton. Its function is as follows. Probable regulatory subunit of type 2A protein phosphatase involved in the control of the dynamic organization of the cortical cytoskeleton. Plays an important role in the organization of interphase microtubule arrays in part through the regulation of nucleation geometry. Required for the reorganization of cortical arrays in response to light. The chain is Probable serine/threonine-protein phosphatase 2A regulatory subunit B'' subunit TON2 (TON2) from Arabidopsis thaliana (Mouse-ear cress).